A 390-amino-acid chain; its full sequence is Endothelial cell-selective adhesion molecule (390 aa).

The N-terminal stretch at 1-29 (MISLPGPLVTNLLRFLFLGLSALAPPSRA) is a signal peptide. Residues 30-143 (ELQLHLPANQ…NGQASGHSIK (114 aa)) form the Ig-like V-type domain. The Extracellular portion of the chain corresponds to 30–248 (ELQLHLPANQ…LEVSTGPGAA (219 aa)). N-linked (GlcNAc...) asparagine glycosylation is found at Asn108, Asn169, Asn213, and Asn236. The region spanning 156 to 242 (PSCRLQGVPR…AQCNVTLEVS (87 aa)) is the Ig-like C2-type domain. A disulfide bridge connects residues Cys174 and Cys224. Residues 249–269 (VVAGAVVGTLVGLGLLAGLVL) form a helical membrane-spanning segment. Topologically, residues 270-390 (LYHRRGKALE…PAQSQAGSLV (121 aa)) are cytoplasmic. Ser301 bears the Phosphoserine mark. The tract at residues 316–365 (ARALRPPHGPPRPGALTPTPSLSSQALPSPRLPTTDGANPQPISLIPGGV) is disordered. A phosphothreonine mark is found at Thr332 and Thr334. The segment covering 333–342 (PTPSLSSQAL) has biased composition (polar residues). A phosphoserine mark is found at Ser336, Ser339, Ser344, and Ser371.

In terms of assembly, interacts with MAGI1.

It localises to the cell junction. The protein localises to the adherens junction. The protein resides in the tight junction. It is found in the cell membrane. Can mediate aggregation most likely through a homophilic molecular interaction. In Macaca fascicularis (Crab-eating macaque), this protein is Endothelial cell-selective adhesion molecule (ESAM).